The chain runs to 228 residues: NAD(P)H-hydrate epimerase (228 aa).

A YjeF N-terminal domain is found at 10 to 214; sequence AIDIDQELFN…DLERKYDLKI (205 aa). 58–62 contacts (6S)-NADPHX; the sequence is NNGGD. Asparagine 59 and aspartate 123 together coordinate K(+). (6S)-NADPHX-binding positions include 127-133 and aspartate 156; that span reads GFSFKPP. Residue serine 159 coordinates K(+).

This sequence belongs to the NnrE/AIBP family. Requires K(+) as cofactor.

The catalysed reaction is (6R)-NADHX = (6S)-NADHX. The enzyme catalyses (6R)-NADPHX = (6S)-NADPHX. Functionally, catalyzes the epimerization of the S- and R-forms of NAD(P)HX, a damaged form of NAD(P)H that is a result of enzymatic or heat-dependent hydration. This is a prerequisite for the S-specific NAD(P)H-hydrate dehydratase to allow the repair of both epimers of NAD(P)HX. This Pediculus humanus subsp. corporis (Body louse) protein is NAD(P)H-hydrate epimerase.